The primary structure comprises 286 residues: 4-hydroxybenzoate octaprenyltransferase (286 aa).

9 consecutive transmembrane segments (helical) span residues Ala-19 to Phe-39, Trp-42 to Val-62, Ala-92 to Ala-112, Ile-115 to Val-135, Met-137 to Val-157, Val-161 to Thr-181, Phe-206 to Leu-226, Ala-233 to Ile-253, and Ala-264 to Leu-284.

Belongs to the UbiA prenyltransferase family. Mg(2+) is required as a cofactor.

The protein resides in the cell inner membrane. The enzyme catalyses all-trans-octaprenyl diphosphate + 4-hydroxybenzoate = 4-hydroxy-3-(all-trans-octaprenyl)benzoate + diphosphate. The protein operates within cofactor biosynthesis; ubiquinone biosynthesis. Its function is as follows. Catalyzes the prenylation of para-hydroxybenzoate (PHB) with an all-trans polyprenyl group. Mediates the second step in the final reaction sequence of ubiquinone-8 (UQ-8) biosynthesis, which is the condensation of the polyisoprenoid side chain with PHB, generating the first membrane-bound Q intermediate 3-octaprenyl-4-hydroxybenzoate. This Polaromonas sp. (strain JS666 / ATCC BAA-500) protein is 4-hydroxybenzoate octaprenyltransferase.